We begin with the raw amino-acid sequence, 153 residues long: Histone H2B.4 (153 aa).

Composition is skewed to basic and acidic residues over residues 1–10 (MAPKKDEKPA) and 20–54 (AKAEAKPKAEKAAKKAKKEPSKKAAKEPKGDGEKK). The disordered stretch occupies residues 1–60 (MAPKKDEKPATAEAGAEAPAKAEAKPKAEKAAKKAKKEPSKKAAKEPKGDGEKKDKKKKK). An N6-acetyllysine mark is found at Lys-41 and Lys-42. Residue Lys-149 forms a Glycyl lysine isopeptide (Lys-Gly) (interchain with G-Cter in ubiquitin) linkage.

This sequence belongs to the histone H2B family. In terms of assembly, the nucleosome is a histone octamer containing two molecules each of H2A, H2B, H3 and H4 assembled in one H3-H4 heterotetramer and two H2A-H2B heterodimers. The octamer wraps approximately 147 bp of DNA. Post-translationally, the N-terminus is blocked. Can be acetylated to form H2BK33ac and H2BK34ac. Acetylated mainly on the ubiquitinated form. In terms of processing, monoubiquitinated to form H2BK143ub1; which is increased during the light period and may give a specific tag for epigenetic transcriptional activation.

It localises to the nucleus. The protein localises to the chromosome. Functionally, core component of nucleosome. Nucleosomes wrap and compact DNA into chromatin, limiting DNA accessibility to the cellular machineries which require DNA as a template. Histones thereby play a central role in transcription regulation, DNA repair, DNA replication and chromosomal stability. DNA accessibility is regulated via a complex set of post-translational modifications of histones, also called histone code, and nucleosome remodeling. This chain is Histone H2B.4, found in Chlamydomonas reinhardtii (Chlamydomonas smithii).